A 796-amino-acid polypeptide reads, in one-letter code: Protocadherin beta-3 (796 aa).

The first 26 residues, 1–26 (MEAGGERFLRQRQVLLLFVFLGGSLA), serve as a signal peptide directing secretion. The Extracellular portion of the chain corresponds to 27–690 (GSESRRYSVA…AQADLLTVYL (664 aa)). 5 consecutive Cadherin domains span residues 35–133 (VAEE…SPVF), 138–242 (MHLK…APEF), 247–347 (YEVA…PPEL), 352–451 (VNSP…APAF), and 456–561 (YTLF…SPFV). Residue asparagine 169 is glycosylated (N-linked (GlcNAc...) asparagine). Residues asparagine 418 and asparagine 436 are each glycosylated (N-linked (GlcNAc...) asparagine). Asparagine 567 carries an N-linked (GlcNAc...) asparagine glycan. In terms of domain architecture, Cadherin 6 spans 568–671 (GSAPCTELVP…LVDGFSQPYL (104 aa)). Residues 691-711 (VVALASVSSLFLFSVLLFVAV) traverse the membrane as a helical segment. At 712-796 (RLCRRSRAAS…PSFRKSFEFS (85 aa)) the chain is on the cytoplasmic side.

It is found in the cell membrane. Its function is as follows. Potential calcium-dependent cell-adhesion protein. May be involved in the establishment and maintenance of specific neuronal connections in the brain. The polypeptide is Protocadherin beta-3 (PCDHB3) (Homo sapiens (Human)).